Reading from the N-terminus, the 340-residue chain is MSSIRLADLAQQLDAQLHGDGDIVITGIASMGSAQAGQITFLSDSRFREKLSSCQASAVVLTADSLPFFTGAALVVRNPYLTYARMAQLMDITPKPAEDIGAGAVIAPDATLGQRVAVGANAVIESGVVLGDDVIIGPGCFVGKNTRIGAGTRLWANVTVYHDISIGERCLIQSGTVIGADGFGYANDRGNWIKIPQLGRVIIGDRVEIGACTTIDRGALDDTRIGNGVIIDNQCQIAHNVVIGDNTAVAGGVIMAGSLTIGRYCMIGGASVINGHMAICDKVTVTGMGMVMRPITEPGVYSSGIPLQPNKEWRKTAALVMNISDMSKRMKAIERKLAKN.

H239 functions as the Proton acceptor in the catalytic mechanism.

This sequence belongs to the transferase hexapeptide repeat family. LpxD subfamily. In terms of assembly, homotrimer.

The catalysed reaction is a UDP-3-O-[(3R)-3-hydroxyacyl]-alpha-D-glucosamine + a (3R)-hydroxyacyl-[ACP] = a UDP-2-N,3-O-bis[(3R)-3-hydroxyacyl]-alpha-D-glucosamine + holo-[ACP] + H(+). It catalyses the reaction UDP-3-O-[(3R)-3-hydroxytetradecanoyl]-alpha-D-glucosamine + (3R)-hydroxytetradecanoyl-[ACP] = UDP-2-N,3-O-bis[(3R)-3-hydroxytetradecanoyl]-alpha-D-glucosamine + holo-[ACP] + H(+). It participates in glycolipid biosynthesis; lipid IV(A) biosynthesis; lipid IV(A) from (3R)-3-hydroxytetradecanoyl-[acyl-carrier-protein] and UDP-N-acetyl-alpha-D-glucosamine: step 3/6. Catalyzes the N-acylation of UDP-3-O-(hydroxytetradecanoyl)glucosamine using 3-hydroxytetradecanoyl-ACP as the acyl donor. Is involved in the biosynthesis of lipid A, a phosphorylated glycolipid that anchors the lipopolysaccharide to the outer membrane of the cell. This is UDP-3-O-(3-hydroxymyristoyl)glucosamine N-acyltransferase from Sodalis glossinidius (strain morsitans).